The sequence spans 62 residues: Photosystem II reaction center protein Z (62 aa).

Helical transmembrane passes span 8–28 (AVFA…VVFA) and 41–61 (FSGT…NSLI).

Belongs to the PsbZ family. In terms of assembly, PSII is composed of 1 copy each of membrane proteins PsbA, PsbB, PsbC, PsbD, PsbE, PsbF, PsbH, PsbI, PsbJ, PsbK, PsbL, PsbM, PsbT, PsbY, PsbZ, Psb30/Ycf12, at least 3 peripheral proteins of the oxygen-evolving complex and a large number of cofactors. It forms dimeric complexes.

It is found in the plastid. Its subcellular location is the chloroplast thylakoid membrane. Functionally, may control the interaction of photosystem II (PSII) cores with the light-harvesting antenna, regulates electron flow through the 2 photosystem reaction centers. PSII is a light-driven water plastoquinone oxidoreductase, using light energy to abstract electrons from H(2)O, generating a proton gradient subsequently used for ATP formation. In Nymphaea alba (White water-lily), this protein is Photosystem II reaction center protein Z.